Here is a 117-residue protein sequence, read N- to C-terminus: Prefoldin subunit beta (117 aa).

Belongs to the prefoldin subunit beta family. In terms of assembly, heterohexamer of two alpha and four beta subunits.

It localises to the cytoplasm. Its function is as follows. Molecular chaperone capable of stabilizing a range of proteins. Seems to fulfill an ATP-independent, HSP70-like function in archaeal de novo protein folding. This Methanosarcina barkeri (strain Fusaro / DSM 804) protein is Prefoldin subunit beta.